Consider the following 550-residue polypeptide: MSSRDKQDSRKKEFKKSLDSETARRKREENSIGIRKNAREELMLKRRGIVQPNPSTSYQIIVPPEVQEQFQKYENETMENKIKNLPGLVTALNSNDQAYVYSSLVQFRKLLSIHAYPPIDQVIECGIIPKLNQLLQCNNPKVQFESAWALTNIASGNNRQTQTVMESGSVPIFIQLLCAETTDEVKEQCAWALGNIAGDTVDSRNYLLKYGAMNALIPLLHYGEDNGATTTSANSERKIGLIQNVVWTISNLCRGKPQPDFSVVSQCLPAINELIRIENLPSEIYGDLCWALSYLCDGPNTKIQAVIDSGVVPRLVKLLEYPDSIVFTPALRAVGNIVTGESSQTQIVIDNNGVELITRLLAVQKKSIRKESCWALSNITAGEPSQIDVVVSNPKTVTTLISLLSHSEHDIKREACWALSNSTNNSSTKSIQTLVRHNILKHFIDLLNSQDLVILKIVLEGLINIIKEGEKTKTKTGVNPYVNLISEMQGESIIYDLQEHQSKDVYKKAFELIEFFESSDYSDSENSEPNINQNGQYEFSSNYNSNSINI.

Residues 1-30 (MSSRDKQDSRKKEFKKSLDSETARRKREEN) show a composition bias toward basic and acidic residues. The disordered stretch occupies residues 1–34 (MSSRDKQDSRKKEFKKSLDSETARRKREENSIGI). The region spanning 1 to 56 (MSSRDKQDSRKKEFKKSLDSETARRKREENSIGIRKNAREELMLKRRGIVQPNPST) is the IBB domain. 8 ARM repeats span residues 116–155 (YPPIDQVIECGIIPKLNQLLQCNNPKVQFESAWALTNIAS), 158–198 (NRQT…NIAG), 201–241 (VDSR…KIGL), 256–297 (KPQP…YLCD), 300–339 (NTKIQAVIDSGVVPRLVKLLEYPDSIVFTPALRAVGNIVT), 342–381 (SSQTQIVIDNNGVELITRLLAVQKKSIRKESCWALSNITA), 385–424 (SQIDVVVSNPKTVTTLISLLSHSEHDIKREACWALSNSTN), and 428–467 (TKSIQTLVRHNILKHFIDLLNSQDLVILKIVLEGLINIIK).

It belongs to the importin alpha family. In terms of assembly, forms a complex with tnpo/importin subunit beta.

It is found in the cytoplasm. Its subcellular location is the nucleus envelope. In terms of biological role, functions in nuclear protein import via a substrate-importin alpha-beta transport complex that passes though the nuclear pore complexes (NPC). Binds specifically and directly to substrates containing either a simple or bipartite NLS motif. The sequence is that of Probable importin subunit alpha-A from Dictyostelium discoideum (Social amoeba).